Consider the following 273-residue polypeptide: 2,3,4,5-tetrahydropyridine-2,6-dicarboxylate N-succinyltransferase (273 aa).

Residues arginine 104 and aspartate 141 each contribute to the substrate site.

It belongs to the transferase hexapeptide repeat family. As to quaternary structure, homotrimer.

It localises to the cytoplasm. It catalyses the reaction (S)-2,3,4,5-tetrahydrodipicolinate + succinyl-CoA + H2O = (S)-2-succinylamino-6-oxoheptanedioate + CoA. The protein operates within amino-acid biosynthesis; L-lysine biosynthesis via DAP pathway; LL-2,6-diaminopimelate from (S)-tetrahydrodipicolinate (succinylase route): step 1/3. In Neisseria meningitidis serogroup A / serotype 4A (strain DSM 15465 / Z2491), this protein is 2,3,4,5-tetrahydropyridine-2,6-dicarboxylate N-succinyltransferase.